The chain runs to 450 residues: Tubulin alpha chain (450 aa).

GTP is bound at residue Gln11. Lys40 carries the post-translational modification N6-acetyllysine. GTP contacts are provided by Glu71, Ser140, Gly144, Thr145, Thr179, Asn206, and Asn228. Glu71 provides a ligand contact to Mg(2+). The active site involves Glu254.

This sequence belongs to the tubulin family. In terms of assembly, dimer of alpha and beta chains. A typical microtubule is a hollow water-filled tube with an outer diameter of 25 nm and an inner diameter of 15 nM. Alpha-beta heterodimers associate head-to-tail to form protofilaments running lengthwise along the microtubule wall with the beta-tubulin subunit facing the microtubule plus end conferring a structural polarity. Microtubules usually have 13 protofilaments but different protofilament numbers can be found in some organisms and specialized cells. The cofactor is Mg(2+). In terms of processing, acetylation of alpha chains at Lys-40 stabilizes microtubules and affects affinity and processivity of microtubule motors. This modification has a role in multiple cellular functions, ranging from cell motility, cell cycle progression or cell differentiation to intracellular trafficking and signaling.

Its subcellular location is the cytoplasm. It is found in the cytoskeleton. The catalysed reaction is GTP + H2O = GDP + phosphate + H(+). In terms of biological role, tubulin is the major constituent of microtubules, a cylinder consisting of laterally associated linear protofilaments composed of alpha- and beta-tubulin heterodimers. Microtubules grow by the addition of GTP-tubulin dimers to the microtubule end, where a stabilizing cap forms. Below the cap, tubulin dimers are in GDP-bound state, owing to GTPase activity of alpha-tubulin. The chain is Tubulin alpha chain from Euplotes vannus (Marine ciliate).